The primary structure comprises 227 residues: SPbeta prophage-derived uncharacterized membrane protein YomJ (227 aa).

2 consecutive transmembrane segments (helical) span residues 16 to 36 and 131 to 151; these read LFFL…IVGL and GIVA…GLSA.

The protein localises to the cell membrane. The protein is SPbeta prophage-derived uncharacterized membrane protein YomJ (yomJ) of Bacillus subtilis (strain 168).